We begin with the raw amino-acid sequence, 213 residues long: Octanoyltransferase (213 aa).

Residues Asp32–Asp207 form the BPL/LPL catalytic domain. Substrate-binding positions include Arg71 to His78, Ser138 to Gly140, and Gly151 to Ala153. The active-site Acyl-thioester intermediate is Cys169.

Belongs to the LipB family.

The protein localises to the cytoplasm. The enzyme catalyses octanoyl-[ACP] + L-lysyl-[protein] = N(6)-octanoyl-L-lysyl-[protein] + holo-[ACP] + H(+). The protein operates within protein modification; protein lipoylation via endogenous pathway; protein N(6)-(lipoyl)lysine from octanoyl-[acyl-carrier-protein]: step 1/2. Catalyzes the transfer of endogenously produced octanoic acid from octanoyl-acyl-carrier-protein onto the lipoyl domains of lipoate-dependent enzymes. Lipoyl-ACP can also act as a substrate although octanoyl-ACP is likely to be the physiological substrate. The protein is Octanoyltransferase of Escherichia coli O8 (strain IAI1).